A 307-amino-acid chain; its full sequence is MEAHKPVLFDEVMEGLAIRPDGIYVDGTFGRGGHSFGILQRLGPNGRLMAMDKDPDAVAVENKALFEDARLSIVHETFANLQKAVRDRGWEGKVNGILLDIGVSSPQLEDAKRGFSFSKDGPLDMRMNPKQSMDAASWINQAAMEDIRRVLWNYGEERFAKRIAQAIVNAREEKPITRTQELSDIVIKAYPQREIKKHPATRTFQAIRIFINRELDELRECLPQCLETLAVGGRLCVISFHSLEDRLVKRFIQKESRDHLPREIPILAKDIKHRLKPLGSLIRPTEAEIKKNPRARSARLRIVEKLS.

S-adenosyl-L-methionine contacts are provided by residues 32–34 (GGH), Asp-52, Phe-78, Asp-100, and Gln-107.

It belongs to the methyltransferase superfamily. RsmH family.

Its subcellular location is the cytoplasm. It catalyses the reaction cytidine(1402) in 16S rRNA + S-adenosyl-L-methionine = N(4)-methylcytidine(1402) in 16S rRNA + S-adenosyl-L-homocysteine + H(+). Its function is as follows. Specifically methylates the N4 position of cytidine in position 1402 (C1402) of 16S rRNA. This Coxiella burnetii (strain CbuG_Q212) (Coxiella burnetii (strain Q212)) protein is Ribosomal RNA small subunit methyltransferase H.